A 228-amino-acid polypeptide reads, in one-letter code: 7-cyano-7-deazaguanine synthase (228 aa).

8 to 18 (LSGGLDSTTCL) provides a ligand contact to ATP. Zn(2+) is bound by residues C188, C198, C201, and C204.

The protein belongs to the QueC family. The cofactor is Zn(2+).

The enzyme catalyses 7-carboxy-7-deazaguanine + NH4(+) + ATP = 7-cyano-7-deazaguanine + ADP + phosphate + H2O + H(+). It functions in the pathway purine metabolism; 7-cyano-7-deazaguanine biosynthesis. Catalyzes the ATP-dependent conversion of 7-carboxy-7-deazaguanine (CDG) to 7-cyano-7-deazaguanine (preQ(0)). The chain is 7-cyano-7-deazaguanine synthase from Legionella pneumophila subsp. pneumophila (strain Philadelphia 1 / ATCC 33152 / DSM 7513).